Reading from the N-terminus, the 131-residue chain is uncharacterized protein (131 aa).

Residues 1–16 (MDVLFVAIFAVPLILG) form the signal peptide.

It localises to the secreted. This is an uncharacterized protein from Homo sapiens (Human).